Here is a 192-residue protein sequence, read N- to C-terminus: CASP-like protein 4C1 (192 aa).

Residues 1–11 (MRSPQSLRNGE) show a composition bias toward polar residues. The segment at 1–23 (MRSPQSLRNGETPSPSPRPPRFP) is disordered. The Cytoplasmic segment spans residues 1 to 40 (MRSPQSLRNGETPSPSPRPPRFPTPHFHSTVSLQKLKRFN). The segment covering 14 to 23 (SPSPRPPRFP) has biased composition (pro residues). Residues 41–61 (LLILVFRLSTFCFSLASSVFM) form a helical membrane-spanning segment. Residues 62–75 (LTNPTWYHFDAFRY) are Extracellular-facing. A helical transmembrane segment spans residues 76–96 (VFAANAIVAIYSLFEMAASVW). Residues 97-107 (EISRGNTLFPE) lie on the Cytoplasmic side of the membrane. Residues 108–128 (ILQVWFDFGHDQVFAYLLLSA) form a helical membrane-spanning segment. Over 129-156 (DSAATALAKTLKGGDTCAASNAFCVQSY) the chain is Extracellular. Residues 157 to 177 (IAIALGFAGFLFLGLSSLLSG) traverse the membrane as a helical segment. Over 178-192 (FRVVCFLINGSRFYV) the chain is Cytoplasmic.

It belongs to the Casparian strip membrane proteins (CASP) family. In terms of assembly, homodimer and heterodimers.

It is found in the cell membrane. The chain is CASP-like protein 4C1 from Ricinus communis (Castor bean).